The following is a 263-amino-acid chain: Hydroxyethylthiazole kinase (263 aa).

Met-39 contacts substrate. ATP is bound by residues Lys-115 and Thr-160. Gly-187 lines the substrate pocket.

This sequence belongs to the Thz kinase family. It depends on Mg(2+) as a cofactor.

The catalysed reaction is 5-(2-hydroxyethyl)-4-methylthiazole + ATP = 4-methyl-5-(2-phosphooxyethyl)-thiazole + ADP + H(+). It functions in the pathway cofactor biosynthesis; thiamine diphosphate biosynthesis; 4-methyl-5-(2-phosphoethyl)-thiazole from 5-(2-hydroxyethyl)-4-methylthiazole: step 1/1. Catalyzes the phosphorylation of the hydroxyl group of 4-methyl-5-beta-hydroxyethylthiazole (THZ). This chain is Hydroxyethylthiazole kinase, found in Staphylococcus aureus (strain bovine RF122 / ET3-1).